A 263-amino-acid chain; its full sequence is Oxygen-evolving enhancer protein 2, chloroplastic (263 aa).

The N-terminal 78 residues, 1–78 (MAAASCFHAL…VGTKVSPADA (78 aa)), are a transit peptide targeting the chloroplast. A compositionally biased stretch (low complexity) spans 14-30 (ARSSSSSLQSSSSRLPA). The tract at residues 14-34 (ARSSSSSLQSSSSRLPAPIKP) is disordered.

This sequence belongs to the PsbP family.

It localises to the plastid. It is found in the chloroplast thylakoid membrane. Its function is as follows. May be involved in the regulation of photosystem II. This is Oxygen-evolving enhancer protein 2, chloroplastic from Helianthus annuus (Common sunflower).